Here is a 67-residue protein sequence, read N- to C-terminus: uncharacterized protein (67 aa).

This is an uncharacterized protein from Archaeoglobus fulgidus (strain ATCC 49558 / DSM 4304 / JCM 9628 / NBRC 100126 / VC-16).